The primary structure comprises 201 residues: ATP-dependent Clp protease proteolytic subunit (201 aa).

Catalysis depends on S101, which acts as the Nucleophile. H126 is an active-site residue.

Belongs to the peptidase S14 family. Fourteen ClpP subunits assemble into 2 heptameric rings which stack back to back to give a disk-like structure with a central cavity, resembling the structure of eukaryotic proteasomes.

The protein resides in the cytoplasm. The enzyme catalyses Hydrolysis of proteins to small peptides in the presence of ATP and magnesium. alpha-casein is the usual test substrate. In the absence of ATP, only oligopeptides shorter than five residues are hydrolyzed (such as succinyl-Leu-Tyr-|-NHMec, and Leu-Tyr-Leu-|-Tyr-Trp, in which cleavage of the -Tyr-|-Leu- and -Tyr-|-Trp bonds also occurs).. Functionally, cleaves peptides in various proteins in a process that requires ATP hydrolysis. Has a chymotrypsin-like activity. Plays a major role in the degradation of misfolded proteins. In Francisella philomiragia subsp. philomiragia (strain ATCC 25017 / CCUG 19701 / FSC 153 / O#319-036), this protein is ATP-dependent Clp protease proteolytic subunit.